Consider the following 336-residue polypeptide: Phospho-N-acetylmuramoyl-pentapeptide-transferase (336 aa).

10 consecutive transmembrane segments (helical) span residues Leu-3–Ile-23, Gly-53–Ile-73, Ser-78–Leu-98, Leu-118–Ile-138, Val-143–Val-163, Gly-174–Ala-194, Phe-200–Asn-220, Val-226–Ala-246, Trp-251–Val-271, and Ala-316–Phe-336.

Belongs to the glycosyltransferase 4 family. MraY subfamily. Mg(2+) is required as a cofactor.

Its subcellular location is the cell membrane. It carries out the reaction UDP-N-acetyl-alpha-D-muramoyl-L-alanyl-gamma-D-glutamyl-L-lysyl-D-alanyl-D-alanine + di-trans,octa-cis-undecaprenyl phosphate = Mur2Ac(oyl-L-Ala-gamma-D-Glu-L-Lys-D-Ala-D-Ala)-di-trans,octa-cis-undecaprenyl diphosphate + UMP. The protein operates within cell wall biogenesis; peptidoglycan biosynthesis. Its function is as follows. Catalyzes the initial step of the lipid cycle reactions in the biosynthesis of the cell wall peptidoglycan: transfers peptidoglycan precursor phospho-MurNAc-pentapeptide from UDP-MurNAc-pentapeptide onto the lipid carrier undecaprenyl phosphate, yielding undecaprenyl-pyrophosphoryl-MurNAc-pentapeptide, known as lipid I. This Streptococcus pyogenes serotype M4 (strain MGAS10750) protein is Phospho-N-acetylmuramoyl-pentapeptide-transferase.